The primary structure comprises 461 residues: Nuclear distribution protein PAC1 (461 aa).

Residues 9 to 41 enclose the LisH domain; the sequence is QAEELHKAIIAYLSANNLSSSATALRTELGLAE. Positions 61 to 88 form a coiled coil; that stretch reads TSVVRLQKKIMDLESRNNALQSELDNAT. WD repeat units follow at residues 114 to 155, 157 to 197, 201 to 248, 251 to 290, 295 to 355, 357 to 396, 401 to 444, and 446 to 461; these read SHQN…RTIK, HTRP…KNIR, GHDH…CLKT, GHTA…PENR, GHDH…LKTL, GHDN…KCVK, VHER…VRIR, and VIAT…IFAN.

This sequence belongs to the WD repeat LIS1/nudF family. In terms of assembly, self-associates. Interacts with NDL1 and dynein.

Its subcellular location is the cytoplasm. It is found in the cytoskeleton. The protein localises to the spindle pole. Its function is as follows. Positively regulates the activity of the minus-end directed microtubule motor protein dynein. May enhance dynein-mediated microtubule sliding by targeting dynein to the microtubule plus end. Required for nuclear migration during vegetative growth as well as development. Required for retrograde early endosome (EE) transport from the hyphal tip. Required for localization of dynein to the mitotic spindle poles. Recruits additional proteins to the dynein complex at SPBs. The chain is Nuclear distribution protein PAC1 from Pyricularia oryzae (strain 70-15 / ATCC MYA-4617 / FGSC 8958) (Rice blast fungus).